Consider the following 432-residue polypeptide: Histidinol dehydrogenase (432 aa).

Tyr133, Gln194, and Asn217 together coordinate NAD(+). 3 residues coordinate substrate: Ser240, Gln262, and His265. Zn(2+) is bound by residues Gln262 and His265. Catalysis depends on proton acceptor residues Glu330 and His331. The substrate site is built by His331, Asp364, Glu418, and His423. Residue Asp364 coordinates Zn(2+). His423 serves as a coordination point for Zn(2+).

The protein belongs to the histidinol dehydrogenase family. Zn(2+) serves as cofactor.

It carries out the reaction L-histidinol + 2 NAD(+) + H2O = L-histidine + 2 NADH + 3 H(+). Its pathway is amino-acid biosynthesis; L-histidine biosynthesis; L-histidine from 5-phospho-alpha-D-ribose 1-diphosphate: step 9/9. Functionally, catalyzes the sequential NAD-dependent oxidations of L-histidinol to L-histidinaldehyde and then to L-histidine. In Nitrosomonas europaea (strain ATCC 19718 / CIP 103999 / KCTC 2705 / NBRC 14298), this protein is Histidinol dehydrogenase.